The sequence spans 209 residues: Uracil phosphoribosyltransferase (209 aa).

5-phospho-alpha-D-ribose 1-diphosphate contacts are provided by residues Arg79, Arg104, and 131 to 139; that span reads DPMLATGGS. Uracil is bound by residues Ile194 and 199–201; that span reads GDA. Asp200 provides a ligand contact to 5-phospho-alpha-D-ribose 1-diphosphate.

The protein belongs to the UPRTase family. Mg(2+) is required as a cofactor.

The enzyme catalyses UMP + diphosphate = 5-phospho-alpha-D-ribose 1-diphosphate + uracil. The protein operates within pyrimidine metabolism; UMP biosynthesis via salvage pathway; UMP from uracil: step 1/1. With respect to regulation, allosterically activated by GTP. In terms of biological role, catalyzes the conversion of uracil and 5-phospho-alpha-D-ribose 1-diphosphate (PRPP) to UMP and diphosphate. The chain is Uracil phosphoribosyltransferase from Shouchella clausii (strain KSM-K16) (Alkalihalobacillus clausii).